Reading from the N-terminus, the 74-residue chain is Kappa-scoloptoxin(07)-Ssm2c (74 aa).

The signal sequence occupies residues 1–19 (MLVFYAPLFVSIFSNTVMG). A propeptide spanning residues 20 to 41 (ATIDKPIPKPILREAIEKIAVN) is cleaved from the precursor.

Belongs to the scoloptoxin-07 family. In terms of processing, contains 3 disulfide bonds. Expressed by the venom gland.

Its subcellular location is the secreted. Its function is as follows. Inhibits voltage-gated potassium channels. This is Kappa-scoloptoxin(07)-Ssm2c from Scolopendra mutilans (Chinese red-headed centipede).